We begin with the raw amino-acid sequence, 423 residues long: UDP-N-acetylglucosamine 1-carboxyvinyltransferase (423 aa).

22 to 23 (KN) provides a ligand contact to phosphoenolpyruvate. Residue Arg-93 coordinates UDP-N-acetyl-alpha-D-glucosamine. The active-site Proton donor is Cys-117. Cys-117 carries the 2-(S-cysteinyl)pyruvic acid O-phosphothioketal modification. UDP-N-acetyl-alpha-D-glucosamine-binding residues include Asp-305 and Ile-327.

It belongs to the EPSP synthase family. MurA subfamily.

The protein resides in the cytoplasm. It carries out the reaction phosphoenolpyruvate + UDP-N-acetyl-alpha-D-glucosamine = UDP-N-acetyl-3-O-(1-carboxyvinyl)-alpha-D-glucosamine + phosphate. The protein operates within cell wall biogenesis; peptidoglycan biosynthesis. In terms of biological role, cell wall formation. Adds enolpyruvyl to UDP-N-acetylglucosamine. In Acidithiobacillus ferrooxidans (strain ATCC 23270 / DSM 14882 / CIP 104768 / NCIMB 8455) (Ferrobacillus ferrooxidans (strain ATCC 23270)), this protein is UDP-N-acetylglucosamine 1-carboxyvinyltransferase.